The sequence spans 61 residues: Small ribosomal subunit protein uS14 (61 aa).

Zn(2+)-binding residues include C24, C27, C40, and C43.

The protein belongs to the universal ribosomal protein uS14 family. Zinc-binding uS14 subfamily. As to quaternary structure, part of the 30S ribosomal subunit. Contacts proteins S3 and S10. Requires Zn(2+) as cofactor.

Binds 16S rRNA, required for the assembly of 30S particles and may also be responsible for determining the conformation of the 16S rRNA at the A site. The polypeptide is Small ribosomal subunit protein uS14 (Frankia casuarinae (strain DSM 45818 / CECT 9043 / HFP020203 / CcI3)).